A 293-amino-acid chain; its full sequence is Energy-coupling factor transporter ATP-binding protein EcfA2 (293 aa).

The region spanning isoleucine 3–aspartate 246 is the ABC transporter domain. Residue glycine 40–serine 47 participates in ATP binding.

It belongs to the ABC transporter superfamily. Energy-coupling factor EcfA family. Forms a stable energy-coupling factor (ECF) transporter complex composed of 2 membrane-embedded substrate-binding proteins (S component), 2 ATP-binding proteins (A component) and 2 transmembrane proteins (T component).

The protein localises to the cell membrane. In terms of biological role, ATP-binding (A) component of a common energy-coupling factor (ECF) ABC-transporter complex. Unlike classic ABC transporters this ECF transporter provides the energy necessary to transport a number of different substrates. This is Energy-coupling factor transporter ATP-binding protein EcfA2 from Bacillus cereus (strain ATCC 10987 / NRS 248).